Reading from the N-terminus, the 416-residue chain is MTDMRRLGQRAKQASLLIAPLSTQIKNRFLSTLAKALVDDTQTLLAANQKDLANAKEHGISDIMMDRLRLTSERIKAIAQGVQQVADLADPIGQVIKGYTNLDGLKILQKRVPLGVIAMIFESRPNVSVDAFSLAFKTNNAIILRGGKDALYSNKALVKLIRQSLEESGITPDAVQLVEDPSHAVAEELMQATDYVDVLIPRGGAKLIQTVKEKAKVPVIETGVGNVHIYVDAQADLDMATKIVINAKTKRPSVCNAAEGLVIHEAVAARFIPMLEKAINQVQPVEWRADDKALPLFEQAVPAKAEDFETEFLDYIMSVKVVSSLEEAISWINQHTSHHSEAIITRDTKAAETFQDLVDAAAVYVNASTRFTDGFVFGLGAEIGISTQKIHARGPMGLEALTSTKFYINGDGHIRE.

The protein belongs to the gamma-glutamyl phosphate reductase family.

It localises to the cytoplasm. It carries out the reaction L-glutamate 5-semialdehyde + phosphate + NADP(+) = L-glutamyl 5-phosphate + NADPH + H(+). The protein operates within amino-acid biosynthesis; L-proline biosynthesis; L-glutamate 5-semialdehyde from L-glutamate: step 2/2. Its function is as follows. Catalyzes the NADPH-dependent reduction of L-glutamate 5-phosphate into L-glutamate 5-semialdehyde and phosphate. The product spontaneously undergoes cyclization to form 1-pyrroline-5-carboxylate. The protein is Gamma-glutamyl phosphate reductase of Streptococcus pyogenes serotype M3 (strain ATCC BAA-595 / MGAS315).